The following is a 417-amino-acid chain: Serine hydroxymethyltransferase (417 aa).

(6S)-5,6,7,8-tetrahydrofolate-binding positions include L121 and 125–127; that span reads GHL. Position 229 is an N6-(pyridoxal phosphate)lysine (K229). 355–357 lines the (6S)-5,6,7,8-tetrahydrofolate pocket; sequence SPF.

Belongs to the SHMT family. Homodimer. Pyridoxal 5'-phosphate is required as a cofactor.

The protein resides in the cytoplasm. The enzyme catalyses (6R)-5,10-methylene-5,6,7,8-tetrahydrofolate + glycine + H2O = (6S)-5,6,7,8-tetrahydrofolate + L-serine. Its pathway is one-carbon metabolism; tetrahydrofolate interconversion. It participates in amino-acid biosynthesis; glycine biosynthesis; glycine from L-serine: step 1/1. In terms of biological role, catalyzes the reversible interconversion of serine and glycine with tetrahydrofolate (THF) serving as the one-carbon carrier. This reaction serves as the major source of one-carbon groups required for the biosynthesis of purines, thymidylate, methionine, and other important biomolecules. Also exhibits THF-independent aldolase activity toward beta-hydroxyamino acids, producing glycine and aldehydes, via a retro-aldol mechanism. The protein is Serine hydroxymethyltransferase of Shewanella baltica (strain OS223).